Here is an 822-residue protein sequence, read N- to C-terminus: Calpain-3 (822 aa).

A disordered region spans residues 1 to 36; the sequence is MPTVISASVAPRTGAEPMSPGPIAQAAQDKGTEAGG. A Calpain catalytic domain is found at 74–418; that stretch reads LFVDPEFPPD…FTKLEICNLT (345 aa). Active-site residues include cysteine 129, histidine 335, and asparagine 359. Residues 419-587 form a domain III region; the sequence is ADALESDKLQ…KRNLSEEVEN (169 aa). A linker region spans residues 588–650; that stretch reads TISVDRPVKK…EPGNTDQESE (63 aa). The interval 604 to 652 is disordered; it reads IFVSDRANSNKELGVDQETEEGKDNTSPDKQAKSPQLEPGNTDQESEEQ. Residues 623–635 are compositionally biased toward basic and acidic residues; the sequence is EEGKDNTSPDKQA. 4 EF-hand domains span residues 650-684, 693-726, 723-758, and 788-822; these read EEQR…VVNK, FTLE…KKIK, KKIK…AGFH, and VRLE…TMYA. Residues 651 to 822 are domain IV; it reads EQRQFRNIFR…LEWLQLTMYA (172 aa). 18 residues coordinate Ca(2+): alanine 663, aspartate 666, glutamate 668, glutamate 673, aspartate 706, aspartate 708, serine 710, arginine 712, glutamate 717, aspartate 736, aspartate 738, serine 740, threonine 742, glutamate 747, aspartate 801, aspartate 803, aspartate 805, and isoleucine 807.

Belongs to the peptidase C2 family. In terms of assembly, homodimer; via EF-hand domain 4. Interacts with TTN/titin. Interacts with CMYA5; this interaction, which results in CMYA5 proteolysis, may protect CAPN3 from autolysis. Interacts with SIMC1. Interacts with UTP25; the interaction is required for CAPN3 translocation to the nucleolus. As to expression, skeletal muscle.

The protein localises to the cytoplasm. It localises to the nucleus. The protein resides in the nucleolus. The catalysed reaction is Broad endopeptidase activity.. With respect to regulation, activated by micromolar concentrations of calcium and inhibited by calpastatin. Its function is as follows. Calcium-regulated non-lysosomal thiol-protease. Proteolytically cleaves CTBP1. Mediates, with UTP25, the proteasome-independent degradation of p53/TP53. The chain is Calpain-3 (CAPN3) from Bos taurus (Bovine).